Reading from the N-terminus, the 264-residue chain is S-adenosylmethionine decarboxylase proenzyme (264 aa).

Serine 113 functions as the Schiff-base intermediate with substrate; via pyruvic acid in the catalytic mechanism. Serine 113 carries the post-translational modification Pyruvic acid (Ser); by autocatalysis. Histidine 118 serves as the catalytic Proton acceptor; for processing activity. Cysteine 141 (proton donor; for catalytic activity) is an active-site residue.

This sequence belongs to the prokaryotic AdoMetDC family. Type 2 subfamily. In terms of assembly, heterooctamer of four alpha and four beta chains arranged as a tetramer of alpha/beta heterodimers. It depends on pyruvate as a cofactor. Is synthesized initially as an inactive proenzyme. Formation of the active enzyme involves a self-maturation process in which the active site pyruvoyl group is generated from an internal serine residue via an autocatalytic post-translational modification. Two non-identical subunits are generated from the proenzyme in this reaction, and the pyruvate is formed at the N-terminus of the alpha chain, which is derived from the carboxyl end of the proenzyme. The post-translation cleavage follows an unusual pathway, termed non-hydrolytic serinolysis, in which the side chain hydroxyl group of the serine supplies its oxygen atom to form the C-terminus of the beta chain, while the remainder of the serine residue undergoes an oxidative deamination to produce ammonia and the pyruvoyl group blocking the N-terminus of the alpha chain.

It carries out the reaction S-adenosyl-L-methionine + H(+) = S-adenosyl 3-(methylsulfanyl)propylamine + CO2. It participates in amine and polyamine biosynthesis; S-adenosylmethioninamine biosynthesis; S-adenosylmethioninamine from S-adenosyl-L-methionine: step 1/1. Its function is as follows. Catalyzes the decarboxylation of S-adenosylmethionine to S-adenosylmethioninamine (dcAdoMet), the propylamine donor required for the synthesis of the polyamines spermine and spermidine from the diamine putrescine. The sequence is that of S-adenosylmethionine decarboxylase proenzyme from Xanthomonas euvesicatoria pv. vesicatoria (strain 85-10) (Xanthomonas campestris pv. vesicatoria).